A 109-amino-acid polypeptide reads, in one-letter code: Thiosulfate sulfurtransferase GlpE (109 aa).

One can recognise a Rhodanese domain in the interval 17-105; that stretch reads HQQTAVLVDI…WHRHFPAEVA (89 aa). Residue cysteine 65 is the Cysteine persulfide intermediate of the active site.

The protein belongs to the GlpE family.

It localises to the cytoplasm. The enzyme catalyses thiosulfate + hydrogen cyanide = thiocyanate + sulfite + 2 H(+). The catalysed reaction is thiosulfate + [thioredoxin]-dithiol = [thioredoxin]-disulfide + hydrogen sulfide + sulfite + 2 H(+). Functionally, transferase that catalyzes the transfer of sulfur from thiosulfate to thiophilic acceptors such as cyanide or dithiols. May function in a CysM-independent thiosulfate assimilation pathway by catalyzing the conversion of thiosulfate to sulfite, which can then be used for L-cysteine biosynthesis. The polypeptide is Thiosulfate sulfurtransferase GlpE (Klebsiella pneumoniae (strain 342)).